The sequence spans 186 residues: Sec-independent protein translocase protein TatB (186 aa).

Residues 1 to 21 (MFDIGFSELILLMVLGLVVLG) traverse the membrane as a helical segment. The interval 162–186 (LSSYYPPDDIEIAPASKSQSSKTKS) is disordered. The span at 177-186 (SKSQSSKTKS) shows a compositional bias: polar residues.

This sequence belongs to the TatB family. In terms of assembly, the Tat system comprises two distinct complexes: a TatABC complex, containing multiple copies of TatA, TatB and TatC subunits, and a separate TatA complex, containing only TatA subunits. Substrates initially bind to the TatABC complex, which probably triggers association of the separate TatA complex to form the active translocon.

It localises to the cell inner membrane. In terms of biological role, part of the twin-arginine translocation (Tat) system that transports large folded proteins containing a characteristic twin-arginine motif in their signal peptide across membranes. Together with TatC, TatB is part of a receptor directly interacting with Tat signal peptides. TatB may form an oligomeric binding site that transiently accommodates folded Tat precursor proteins before their translocation. The polypeptide is Sec-independent protein translocase protein TatB (Haemophilus influenzae (strain 86-028NP)).